The following is a 392-amino-acid chain: Vascular endothelial growth factor A, long form (392 aa).

2 disordered regions span residues 1–44 (MTDR…VEGV) and 73–174 (DKPI…GPGR). Basic and acidic residues predominate over residues 89 to 104 (PGPEKRGEEEKEEERG). Low complexity-rich tracts occupy residues 121–143 (AAVCADSAPAARAPQAPARASVP) and 158–174 (PRSPSRRGSASRAGPGR). Disulfide bonds link Cys229-Cys271, Cys260-Cys305, and Cys264-Cys307. Asn278 carries N-linked (GlcNAc...) asparagine glycosylation. Over residues 309 to 320 (PKKDRTKPEKKS) the composition is skewed to basic and acidic residues. Positions 309–337 (PKKDRTKPEKKSVRGKGKGQKRKRKKSRF) are disordered. The segment covering 321–337 (VRGKGKGQKRKRKKSRF) has biased composition (basic residues).

It belongs to the PDGF/VEGF growth factor family. Homodimer; disulfide-linked. Also found as heterodimer with PGF. Interacts with NRP1. Interacts with isoform 2 of BSG. Interacts with CD82; this interaction inhibits VEGFA-mediated signaling pathway. Produced by use of an alternative upstream CUG codon and post-translationally processed into the N-terminal N-VEGF form and the C-terminal secreted VEGFA form. In terms of tissue distribution, in developing embryos, expressed mainly in the choroid plexus, paraventricular neuroepithelium, placenta and kidney glomeruli. Also found in bronchial epithelium, adrenal gland and in seminiferous tubules of testis. High expression continues in kidney glomeruli and choroid plexus in adults.

The protein resides in the cytoplasm. The protein localises to the nucleus. It localises to the secreted. It is found in the endoplasmic reticulum. Its subcellular location is the golgi apparatus. The protein resides in the extracellular space. The protein localises to the extracellular matrix. It localises to the cell membrane. In terms of biological role, participates in the induction of key genes involved in the response to hypoxia and in the induction of angiogenesis such as HIF1A. Involved in protecting cells from hypoxia-mediated cell death. Its function is as follows. Growth factor active in angiogenesis, vasculogenesis and endothelial cell growth. Induces endothelial cell proliferation, promotes cell migration, inhibits apoptosis and induces permeabilization of blood vessels. Binds to the FLT1/VEGFR1 and KDR/VEGFR2 receptors, heparan sulfate and heparin. Binds to the NRP1/neuropilin-1 receptor. Binding to NRP1 receptor initiates a signaling pathway needed for motor neuron axon guidance and cell body migration, including for the caudal migration of facial motor neurons from rhombomere 4 to rhombomere 6 during embryonic development. Also binds the DEAR/FBXW7-AS1 receptor. May play a role in increasing vascular permeability during lactation, when increased transport of molecules from the blood is required for efficient milk protein synthesis. The chain is Vascular endothelial growth factor A, long form (Vegfa) from Mus musculus (Mouse).